The sequence spans 85 residues: Cytochrome c2 (85 aa).

Heme c-binding residues include cysteine 12, cysteine 15, histidine 16, and methionine 61.

It belongs to the cytochrome c family. Binds 1 heme c group covalently per subunit.

Cytochrome c2 is found mainly in purple, non-sulfur, photosynthetic bacteria where it functions as the electron donor to the oxidized bacteriochlorophyll in the photophosphorylation pathway. However, it may also have a role in the respiratory chain and is found in some non-photosynthetic bacteria. In Rubrivivax gelatinosus (Rhodocyclus gelatinosus), this protein is Cytochrome c2.